Reading from the N-terminus, the 446-residue chain is Glutamate--tRNA ligase 2 (446 aa).

The 'HIGH' region signature appears at Pro-8–Asn-18. Positions Gly-239–Arg-243 match the 'KMSKS' region motif. Lys-242 is a binding site for ATP.

Belongs to the class-I aminoacyl-tRNA synthetase family. Glutamate--tRNA ligase type 1 subfamily. As to quaternary structure, monomer.

Its subcellular location is the cytoplasm. The enzyme catalyses tRNA(Glu) + L-glutamate + ATP = L-glutamyl-tRNA(Glu) + AMP + diphosphate. Functionally, catalyzes the attachment of glutamate to tRNA(Glu) in a two-step reaction: glutamate is first activated by ATP to form Glu-AMP and then transferred to the acceptor end of tRNA(Glu). This is Glutamate--tRNA ligase 2 from Methylobacterium radiotolerans (strain ATCC 27329 / DSM 1819 / JCM 2831 / NBRC 15690 / NCIMB 10815 / 0-1).